The primary structure comprises 319 residues: Thioredoxin reductase (319 aa).

An FAD-binding site is contributed by 37 to 44 (ERGVPGGQ). The cysteines at positions 136 and 139 are disulfide-linked. An FAD-binding site is contributed by 279-288 (DVRAKSLRQI).

This sequence belongs to the class-II pyridine nucleotide-disulfide oxidoreductase family. As to quaternary structure, homodimer. FAD serves as cofactor.

The protein localises to the cytoplasm. The catalysed reaction is [thioredoxin]-dithiol + NADP(+) = [thioredoxin]-disulfide + NADPH + H(+). The polypeptide is Thioredoxin reductase (trxB) (Listeria monocytogenes serovar 1/2a (strain ATCC BAA-679 / EGD-e)).